Reading from the N-terminus, the 1314-residue chain is AT-rich interactive domain-containing protein 4B (1314 aa).

2 disordered regions span residues leucine 123–threonine 169 and lysine 266–proline 306. Phosphoserine is present on residues serine 276, serine 295, and serine 296. Over residues glutamate 277–phenylalanine 305 the composition is skewed to acidic residues. Residues proline 306 to arginine 398 form the ARID domain. Residues lysine 428 and lysine 461 each participate in a glycyl lysine isopeptide (Lys-Gly) (interchain with G-Cter in SUMO2) cross-link. Basic and acidic residues predominate over residues asparagine 439–isoleucine 464. Disordered regions lie at residues asparagine 439 to valine 577, isoleucine 635 to methionine 678, alanine 709 to arginine 888, lysine 943 to lysine 1215, and valine 1256 to alanine 1290. Phosphoserine is present on serine 482. Basic and acidic residues predominate over residues lysine 486–glutamate 511. The segment covering asparagine 531–glutamate 567 has biased composition (acidic residues). Positions glycine 572–isoleucine 624 constitute a Tudor-knot domain. Residues asparagine 643–serine 656 show a composition bias toward basic and acidic residues. Serine 666, serine 668, serine 675, and serine 717 each carry phosphoserine. 2 stretches are compositionally biased toward basic and acidic residues: residues glutamate 722–glutamine 754 and serine 778–glutamate 787. Lysine 751 participates in a covalent cross-link: Glycyl lysine isopeptide (Lys-Gly) (interchain with G-Cter in SUMO2). Residues serine 778 and serine 790 each carry the phosphoserine modification. Positions alanine 788–glutamate 800 are enriched in acidic residues. A Phosphothreonine modification is found at threonine 793. 3 stretches are compositionally biased toward basic and acidic residues: residues valine 808–leucine 817, glycine 841–leucine 853, and lysine 997–glutamate 1012. A compositionally biased stretch (polar residues) spans phenylalanine 1013–asparagine 1023. A Phosphoserine modification is found at serine 1016. At threonine 1028 the chain carries Phosphothreonine. The span at glutamate 1030–valine 1051 shows a compositional bias: low complexity. Serine 1031 carries the phosphoserine modification. The span at glutamate 1058 to threonine 1067 shows a compositional bias: basic and acidic residues. Low complexity predominate over residues serine 1089–serine 1103. Residues lysine 1132–lysine 1150 show a composition bias toward basic residues. A Phosphothreonine modification is found at threonine 1152. Residues serine 1154, serine 1155, serine 1157, and serine 1161 each carry the phosphoserine modification. The segment covering glutamate 1164–serine 1186 has biased composition (polar residues). Residues arginine 1198–serine 1210 show a composition bias toward basic and acidic residues. Residues glutamate 1227–glutamate 1272 adopt a coiled-coil conformation. Residues alanine 1274 to alanine 1290 show a composition bias toward low complexity.

In terms of assembly, component of a Sin3A corepressor complex consisting of SIN3A, SAP130, SUDS3/SAP45, SAP180, HDAC1 and HDAC2. Interacts with ARID4A. Interacts with AR. As to expression, expressed in Sertoli cells of the testis.

Its subcellular location is the nucleus. In terms of biological role, acts as a transcriptional repressor. May function in the assembly and/or enzymatic activity of the Sin3A corepressor complex or in mediating interactions between the complex and other regulatory complexes. Plays a role in the regulation of epigenetic modifications at the PWS/AS imprinting center near the SNRPN promoter, where it might function as part of a complex with RB1 and ARID4A. Involved in spermatogenesis, together with ARID4A, where it functions as a transcriptional coactivator for AR (androgen receptor) and enhances expression of genes required for sperm maturation. Regulates expression of the tight junction protein CLDN3 in the testis, which is important for integrity of the blood-testis barrier. Plays a role in myeloid homeostasis where it regulates the histone methylation state of bone marrow cells and expression of various genes involved in hematopoiesis. May function as a leukemia suppressor. In Mus musculus (Mouse), this protein is AT-rich interactive domain-containing protein 4B (Arid4b).